The following is a 205-amino-acid chain: Proteasome subunit beta type-3 (205 aa).

Ser2 is modified (N-acetylserine). At Lys77 the chain carries N6-acetyllysine.

Belongs to the peptidase T1B family. The 26S proteasome consists of a 20S proteasome core and two 19S regulatory subunits. The 20S proteasome core is a barrel-shaped complex made of 28 subunits that are arranged in four stacked rings. The two outer rings are each formed by seven alpha subunits, and the two inner rings are formed by seven beta subunits. The proteolytic activity is exerted by three beta-subunits PSMB5, PSMB6 and PSMB7.

The protein localises to the cytoplasm. It is found in the nucleus. In terms of biological role, non-catalytic component of the 20S core proteasome complex involved in the proteolytic degradation of most intracellular proteins. This complex plays numerous essential roles within the cell by associating with different regulatory particles. Associated with two 19S regulatory particles, forms the 26S proteasome and thus participates in the ATP-dependent degradation of ubiquitinated proteins. The 26S proteasome plays a key role in the maintenance of protein homeostasis by removing misfolded or damaged proteins that could impair cellular functions, and by removing proteins whose functions are no longer required. Associated with the PA200 or PA28, the 20S proteasome mediates ubiquitin-independent protein degradation. This type of proteolysis is required in several pathways including spermatogenesis (20S-PA200 complex) or generation of a subset of MHC class I-presented antigenic peptides (20S-PA28 complex). This chain is Proteasome subunit beta type-3 (PSMB3), found in Bos taurus (Bovine).